The primary structure comprises 358 residues: Photosystem II protein D1 2 (358 aa).

Helical transmembrane passes span 28 to 45 (YVGW…AATT), 117 to 132 (HFLI…QWEL), and 141 to 155 (WICV…AAFA). His-117 provides a ligand contact to chlorophyll a. Tyr-125 lines the pheophytin a pocket. The [CaMn4O5] cluster site is built by Asp-169 and Glu-188. The chain crosses the membrane as a helical span at residues 196–217 (FHMLGVAGVFGGSLFSAMHGSL). His-197 is a chlorophyll a binding site. A quinone-binding positions include His-214 and 263 to 264 (SF). His-214 contributes to the Fe cation binding site. His-271 contacts Fe cation. A helical transmembrane segment spans residues 273–287 (FLAAWPVVGIWFTSM). The [CaMn4O5] cluster site is built by His-331, Glu-332, Asp-341, and Ala-343. Residues 344-358 (ATESTPVALQAPTIG) constitute a propeptide that is removed on maturation.

Belongs to the reaction center PufL/M/PsbA/D family. PSII is composed of 1 copy each of membrane proteins PsbA, PsbB, PsbC, PsbD, PsbE, PsbF, PsbH, PsbI, PsbJ, PsbK, PsbL, PsbM, PsbT, PsbX, PsbY, PsbZ, Psb30/Ycf12, peripheral proteins PsbO, CyanoQ (PsbQ), PsbU, PsbV and a large number of cofactors. It forms dimeric complexes. The D1/D2 heterodimer binds P680, chlorophylls that are the primary electron donor of PSII, and subsequent electron acceptors. It shares a non-heme iron and each subunit binds pheophytin, quinone, additional chlorophylls, carotenoids and lipids. D1 provides most of the ligands for the Mn4-Ca-O5 cluster of the oxygen-evolving complex (OEC). There is also a Cl(-1) ion associated with D1 and D2, which is required for oxygen evolution. The PSII complex binds additional chlorophylls, carotenoids and specific lipids. serves as cofactor. Post-translationally, tyr-160 forms a radical intermediate that is referred to as redox-active TyrZ, YZ or Y-Z. C-terminally processed by CtpA; processing is essential to allow assembly of the oxygen-evolving complex and thus photosynthetic growth.

The protein localises to the cellular thylakoid membrane. The enzyme catalyses 2 a plastoquinone + 4 hnu + 2 H2O = 2 a plastoquinol + O2. Functionally, photosystem II (PSII) is a light-driven water:plastoquinone oxidoreductase that uses light energy to abstract electrons from H(2)O, generating O(2) and a proton gradient subsequently used for ATP formation. It consists of a core antenna complex that captures photons, and an electron transfer chain that converts photonic excitation into a charge separation. The D1/D2 (PsbA/PsbD) reaction center heterodimer binds P680, the primary electron donor of PSII as well as several subsequent electron acceptors. This chain is Photosystem II protein D1 2, found in Synechococcus sp. (strain WH7803).